Consider the following 125-residue polypeptide: Small ribosomal subunit protein bS6 (125 aa).

Residues 96–125 (ETGASSMMKTVEREEARKASQAEFAAANER) form a disordered region. Residues 105–115 (TVEREEARKAS) are compositionally biased toward basic and acidic residues.

It belongs to the bacterial ribosomal protein bS6 family.

Its function is as follows. Binds together with bS18 to 16S ribosomal RNA. The sequence is that of Small ribosomal subunit protein bS6 from Paracidovorax citrulli (strain AAC00-1) (Acidovorax citrulli).